The sequence spans 567 residues: Dihydroxy-acid dehydratase 2 (567 aa).

Cys-56 contacts [2Fe-2S] cluster. Mg(2+) is bound at residue Asp-88. A [2Fe-2S] cluster-binding site is contributed by Cys-129. Mg(2+) contacts are provided by Asp-130 and Lys-131. The residue at position 131 (Lys-131) is an N6-carboxylysine. Cys-206 is a binding site for [2Fe-2S] cluster. Glu-457 lines the Mg(2+) pocket. Ser-483 acts as the Proton acceptor in catalysis.

The protein belongs to the IlvD/Edd family. As to quaternary structure, homodimer. [2Fe-2S] cluster is required as a cofactor. It depends on Mg(2+) as a cofactor.

It carries out the reaction (2R)-2,3-dihydroxy-3-methylbutanoate = 3-methyl-2-oxobutanoate + H2O. It catalyses the reaction (2R,3R)-2,3-dihydroxy-3-methylpentanoate = (S)-3-methyl-2-oxopentanoate + H2O. The protein operates within amino-acid biosynthesis; L-isoleucine biosynthesis; L-isoleucine from 2-oxobutanoate: step 3/4. Its pathway is amino-acid biosynthesis; L-valine biosynthesis; L-valine from pyruvate: step 3/4. Functions in the biosynthesis of branched-chain amino acids. Catalyzes the dehydration of (2R,3R)-2,3-dihydroxy-3-methylpentanoate (2,3-dihydroxy-3-methylvalerate) into 2-oxo-3-methylpentanoate (2-oxo-3-methylvalerate) and of (2R)-2,3-dihydroxy-3-methylbutanoate (2,3-dihydroxyisovalerate) into 2-oxo-3-methylbutanoate (2-oxoisovalerate), the penultimate precursor to L-isoleucine and L-valine, respectively. The polypeptide is Dihydroxy-acid dehydratase 2 (Corynebacterium efficiens (strain DSM 44549 / YS-314 / AJ 12310 / JCM 11189 / NBRC 100395)).